The primary structure comprises 96 residues: Co-chaperonin GroES (96 aa).

The protein belongs to the GroES chaperonin family. In terms of assembly, heptamer of 7 subunits arranged in a ring. Interacts with the chaperonin GroEL.

It localises to the cytoplasm. Functionally, together with the chaperonin GroEL, plays an essential role in assisting protein folding. The GroEL-GroES system forms a nano-cage that allows encapsulation of the non-native substrate proteins and provides a physical environment optimized to promote and accelerate protein folding. GroES binds to the apical surface of the GroEL ring, thereby capping the opening of the GroEL channel. This chain is Co-chaperonin GroES, found in Delftia acidovorans (strain DSM 14801 / SPH-1).